The chain runs to 574 residues: ATP-grasp enzyme fsqD (574 aa).

The region spanning 234–462 is the ATP-grasp domain; the sequence is NKFLTSKYVG…YWGLAAVLGV (229 aa). 263 to 318 provides a ligand contact to ATP; that stretch reads ALPYPLIVKPCDGWSSEGVSRVESPDAFPAAVKSIDTSRHGTEFVMEPYCDGPEVD. The Mg(2+) site is built by glutamate 394, glutamate 431, and asparagine 433. 3 residues coordinate Mn(2+): glutamate 394, glutamate 431, and asparagine 433.

It depends on Mg(2+) as a cofactor. The cofactor is Mn(2+).

It functions in the pathway secondary metabolite biosynthesis. Its function is as follows. ATP-grasp enzyme; part of the gene cluster that mediates the biosynthesis of the isoquinoline alkaloids fumisoquin A, fumisoquin B and fumisoquin C; as well as small amounts of fumipyrrole as a shunt metabolite. The products of the cluster lead to a brown coloration and are important for growth and conidiation. The nonribosomal peptide synthetase-like protein fsqF, which lacks a canonical condensation domain, is required for addition of a serine-derived dehydroalanine moiety to activated tyrosine but is not essential for the subsequent steps leading to isoquinoline formation. A different enzyme, most likely the ATP-grasp enzyme fsqD, is responsible for activation of tyrosine. Three additional enzymes encoded by the fsq cluster, the N-methyltransferase fsqC, the phenol 2-monooxygenase fsqG and the FAD-dependent oxidase fsqB, catalyze the formation of the isoquinoline ring system in the fumisoquins. FsqB converts the fspF thiolation domain-bound (2S,4S,5S)-2-amino-6-(3,4-dihydroxyphenyl)-4-hydroxy-5-(methylamino)hexanoyl into isoquinoline. The cyclization most likely proceeds via a two-step mechanism, beginning with FAD-dependent oxidation of the methyl group to an iminium species followed by electrophilic attack on the deprotonated phenol. This Aspergillus fumigatus (strain ATCC MYA-4609 / CBS 101355 / FGSC A1100 / Af293) (Neosartorya fumigata) protein is ATP-grasp enzyme fsqD.